The sequence spans 141 residues: Nucleoside diphosphate kinase (141 aa).

The ATP site is built by Lys-11, Tyr-59, Arg-87, Thr-93, Arg-104, and Asn-114. Catalysis depends on His-117, which acts as the Pros-phosphohistidine intermediate.

It belongs to the NDK family. Homotetramer. The cofactor is Mg(2+).

It localises to the cytoplasm. The catalysed reaction is a 2'-deoxyribonucleoside 5'-diphosphate + ATP = a 2'-deoxyribonucleoside 5'-triphosphate + ADP. It carries out the reaction a ribonucleoside 5'-diphosphate + ATP = a ribonucleoside 5'-triphosphate + ADP. Functionally, major role in the synthesis of nucleoside triphosphates other than ATP. The ATP gamma phosphate is transferred to the NDP beta phosphate via a ping-pong mechanism, using a phosphorylated active-site intermediate. In Orientia tsutsugamushi (strain Boryong) (Rickettsia tsutsugamushi), this protein is Nucleoside diphosphate kinase.